The chain runs to 343 residues: N-acetyl-gamma-glutamyl-phosphate reductase (343 aa).

Residue Cys-147 is part of the active site.

This sequence belongs to the NAGSA dehydrogenase family. Type 1 subfamily.

The protein localises to the cytoplasm. The catalysed reaction is N-acetyl-L-glutamate 5-semialdehyde + phosphate + NADP(+) = N-acetyl-L-glutamyl 5-phosphate + NADPH + H(+). Its pathway is amino-acid biosynthesis; L-arginine biosynthesis; N(2)-acetyl-L-ornithine from L-glutamate: step 3/4. Its function is as follows. Catalyzes the NADPH-dependent reduction of N-acetyl-5-glutamyl phosphate to yield N-acetyl-L-glutamate 5-semialdehyde. The polypeptide is N-acetyl-gamma-glutamyl-phosphate reductase (Staphylococcus saprophyticus subsp. saprophyticus (strain ATCC 15305 / DSM 20229 / NCIMB 8711 / NCTC 7292 / S-41)).